The primary structure comprises 332 residues: N-arachidonyl glycine receptor (332 aa).

Over 1–26 the chain is Extracellular; sequence MTTPHSQAQPGLPIDPHPDEYKVAAL. Residues 27-47 traverse the membrane as a helical segment; sequence VFYSCIFIIGLFVNVTALWVF. Residues 48-56 lie on the Cytoplasmic side of the membrane; the sequence is SCTTKKRTT. Residues 57–77 form a helical membrane-spanning segment; it reads VTVYMMNVALLDLVFIMSLPF. At 78–95 the chain is on the extracellular side; the sequence is RMLYYAKGEWPFGEYFCR. A disulfide bridge connects residues Cys-94 and Cys-173. A helical membrane pass occupies residues 96–116; that stretch reads ILGALTVFYPSIALWLLAFIS. Residues 117–138 are Cytoplasmic-facing; the sequence is ADRYMAIVQPKYAKELKNTCKA. Residues 139–159 form a helical membrane-spanning segment; it reads VMACVGVWIMTLTTTIPLLLL. Over 160 to 192 the chain is Extracellular; that stretch reads YEDPDTASSTPPTCLKISDIIYLKAINALNFTR. Residue Asn-189 is glycosylated (N-linked (GlcNAc...) asparagine). The helical transmembrane segment at 193–213 threads the bilayer; it reads LIFFFLIPLFIMIGCYLVIIH. Over 214-233 the chain is Cytoplasmic; the sequence is SLLHGKTSKLKPKVKEKSIR. Residues 234–254 traverse the membrane as a helical segment; the sequence is IIITLMVQVLVCFMPFHICFA. Residues 255 to 269 lie on the Extracellular side of the membrane; the sequence is FLMLGGDENSYNPWG. The helical transmembrane segment at 270–290 threads the bilayer; that stretch reads AFTTFLMNLSTCLDVILYYIV. Residues 291–332 are Cytoplasmic-facing; that stretch reads SKQFQARVISVMLYRNYLRSVRRKSFRSGSLRSLSNINSEML. At Ser-323 the chain carries Phosphoserine.

Belongs to the G-protein coupled receptor 1 family.

Its subcellular location is the cell membrane. It is found in the cytoplasmic vesicle membrane. G protein-coupled receptor (GPCR) that plays a role in diverse physiological processes particularly within the immune and nervous systems. Becomes active when triggered by various endogenous ligands including endocannabinoid N-arachidonyl glycine (NAGly), delta-9-tetrahydrocannabinol or resolvin D2/RvD2 derived from the omega-3 fatty acid docosahexaenoic acid (DHA). Upon RvD2 binding, facilitates the resolution of inflammation, aiding in tissue repair and homeostasis. Mechanistically, RvD2 ligation initiates Galphas protein coupling, activation of cAMP-PKA signaling pathway and phosphorylation of STAT3, leading to RvD2-stimulated macrophage phagocytosis. Mediates NAGly-induced process of reorganization of actin filaments and induction of acrosomal exocytosis. Activation by N-arachidonoyl glycine (NAGly) can also induce apoptosis in macrophages. Plays a role in homeostasis of CD8+ subsets of intraepithelial lymphocytes (IELs) (CD8alphaalpha and CD8alphabeta IELs) in small intestine by supporting preferential migration of CD8alphaalpha T-cells to intraepithelial compartment over lamina propria compartment, and by mediating their reconstitution into small intestine after bone marrow transplant. Participates also in hypotensive responses, mediating reduction in intraocular and blood pressure. This is N-arachidonyl glycine receptor (GPR18) from Bos taurus (Bovine).